A 146-amino-acid chain; its full sequence is Holo-[acyl-carrier-protein] synthase (146 aa).

Mg(2+) contacts are provided by Asp-9 and Glu-63.

This sequence belongs to the P-Pant transferase superfamily. AcpS family. Mg(2+) serves as cofactor.

It localises to the cytoplasm. It catalyses the reaction apo-[ACP] + CoA = holo-[ACP] + adenosine 3',5'-bisphosphate + H(+). Functionally, transfers the 4'-phosphopantetheine moiety from coenzyme A to a Ser of acyl-carrier-protein. This is Holo-[acyl-carrier-protein] synthase from Burkholderia multivorans (strain ATCC 17616 / 249).